The following is a 193-amino-acid chain: Zinc finger protein AZF3 (193 aa).

2 C2H2-type zinc fingers span residues 75 to 97 (YKCG…KASH) and 118 to 140 (HVCS…KRCH).

As to expression, expressed in roots.

The protein resides in the nucleus. Functionally, transcriptional repressor probably involved in abiotic stress responses. Binds DNA in a sequence-specific manner and can repress the transactivation activity of other transcription factors. The chain is Zinc finger protein AZF3 (AZF3) from Arabidopsis thaliana (Mouse-ear cress).